Consider the following 833-residue polypeptide: MSQMGLHPRRGLTGHWLQRFQPCLPLHTVQWRRLLLLAFLLSLAWPASPLPREEEIVFPEKLNGSSILPGSGVPARLLYRLPAFGEMLLLELEQDPGVQVEGLTVQYLGQAPEMLGGAEPGTYLTGTINGDPESVASLHWDGGALLGVLQYRGAELHLQPLEGGALNSAGGPGAHILRRKSPASSQGPMCTVKAPSGSPSPISRRTKRFASLSRFVETLVVADDKMAAFHGTGLKRYLLTVMAAAAKAFKHPSIRNPVNLVVTRLVILGSGQEGPQVGPSAAQTLRSFCTWQRGLNTPNDSDPDHFDTAILFTRQDLCGVSTCDTLGMADVGTVCDPARSCAIVEDDGLQSAFTAAHELGHVFNMLHDNSKPCTNLNGQGGSSRHVMAPVMAHVDPEEPWSPCSARFITDFLDNGYGHCLLDKPEAPLHLPATFPGKDYDADRQCQLTFGPDSSHCPQLPPPCAALWCSGHLNGHAMCQTKHSPWADGTPCGSSQACMGGRCLHVDQLKDFNVPQAGGWGPWGPWGDCSRTCGGGVQFSSRDCTRPVPRNGGKYCEGRRTRFRSCNTENCPHGSALTFREEQCAAYNHRTDLFKSFPGPMDWVPRYTGVAPRDQCKLTCQARALGYYYVLEPRVADGTPCSPDTSSVCVQGRCIHAGCDRIIGSKKKFDKCMVCGGDGSRCSKQSGSFKKFRYGYSDVVTIPAGATHILVRQQGGSGLKSIYLALKLSDGSYALNGEYTLMPSPTDVVLPGAVSLRYSGATAASETLSGHGPLAQPLTLQVLVAGNPQNARLRYSFFVPRPVPSTPRPPPQDWLQRRAEILKILRKRPWAGRK.

The first 49 residues, 1–49 (MSQMGLHPRRGLTGHWLQRFQPCLPLHTVQWRRLLLLAFLLSLAWPASP), serve as a signal peptide directing secretion. The propeptide occupies 50-208 (LPREEEIVFP…PSPISRRTKR (159 aa)). Residue asparagine 63 is glycosylated (N-linked (GlcNAc...) asparagine). The segment at 180–204 (KSPASSQGPMCTVKAPSGSPSPISR) is disordered. Residues 188-195 (PMCTVKAP) carry the Cysteine switch motif. Cysteine 190 is a binding site for Zn(2+). A Peptidase M12B domain is found at 214–424 (RFVETLVVAD…GYGHCLLDKP (211 aa)). Cystine bridges form between cysteine 289/cysteine 341, cysteine 318/cysteine 323, cysteine 335/cysteine 419, cysteine 373/cysteine 403, cysteine 445/cysteine 468, cysteine 456/cysteine 478, cysteine 463/cysteine 497, cysteine 491/cysteine 502, cysteine 528/cysteine 565, cysteine 532/cysteine 570, and cysteine 543/cysteine 555. A glycan (N-linked (GlcNAc...) asparagine) is linked at asparagine 299. Histidine 357 serves as a coordination point for Zn(2+). Residue glutamate 358 is part of the active site. Zn(2+)-binding residues include histidine 361 and histidine 367. A Disintegrin domain is found at 433–515 (TFPGKDYDAD…DQLKDFNVPQ (83 aa)). Residues 516–571 (AGGWGPWGPWGDCSRTCGGGVQFSSRDCTRPVPRNGGKYCEGRRTRFRSCNTENCP) form the TSP type-1 domain. The segment at 682 to 833 (SKQSGSFKKF…LRKRPWAGRK (152 aa)) is spacer.

Interacts with SRPX2. Zn(2+) is required as a cofactor. The precursor is cleaved by a furin endopeptidase. In terms of processing, glycosylated. Can be O-fucosylated by POFUT2 on a serine or a threonine residue found within the consensus sequence C1-X(2)-(S/T)-C2-G of the TSP type-1 repeat domains where C1 and C2 are the first and second cysteine residue of the repeat, respectively. Fucosylated repeats can then be further glycosylated by the addition of a beta-1,3-glucose residue by the glucosyltransferase, B3GALTL. Fucosylation mediates the efficient secretion of ADAMTS family members. Can also be C-glycosylated with one or two mannose molecules on tryptophan residues within the consensus sequence W-X-X-W of the TPRs, and N-glycosylated. These other glycosylations can also facilitate secretion.

It localises to the secreted. The protein resides in the extracellular space. It is found in the extracellular matrix. It catalyses the reaction Glutamyl endopeptidase. Bonds cleaved include 370-Thr-Glu-Gly-Glu-|-Ala-Arg-Gly-Ser-377 in the interglobular domain of mammalian aggrecan.. Functionally, cleaves aggrecan, a cartilage proteoglycan, at the '392-Glu-|-Ala-393' site and may be involved in its turnover. Also cleaves COMP. May play an important role in the destruction of aggrecan in arthritic diseases. This chain is A disintegrin and metalloproteinase with thrombospondin motifs 4 (Adamts4), found in Mus musculus (Mouse).